The chain runs to 163 residues: NAD(P)H-quinone oxidoreductase subunit I, chloroplastic (163 aa).

2 4Fe-4S ferredoxin-type domains span residues 55–84 (GRIH…VDWK) and 95–124 (LNYS…MTEE). Cys-64, Cys-67, Cys-70, Cys-74, Cys-104, Cys-107, Cys-110, and Cys-114 together coordinate [4Fe-4S] cluster.

Belongs to the complex I 23 kDa subunit family. In terms of assembly, NDH is composed of at least 16 different subunits, 5 of which are encoded in the nucleus. [4Fe-4S] cluster serves as cofactor.

It is found in the plastid. The protein resides in the chloroplast thylakoid membrane. The enzyme catalyses a plastoquinone + NADH + (n+1) H(+)(in) = a plastoquinol + NAD(+) + n H(+)(out). It catalyses the reaction a plastoquinone + NADPH + (n+1) H(+)(in) = a plastoquinol + NADP(+) + n H(+)(out). Functionally, NDH shuttles electrons from NAD(P)H:plastoquinone, via FMN and iron-sulfur (Fe-S) centers, to quinones in the photosynthetic chain and possibly in a chloroplast respiratory chain. The immediate electron acceptor for the enzyme in this species is believed to be plastoquinone. Couples the redox reaction to proton translocation, and thus conserves the redox energy in a proton gradient. In Glycine max (Soybean), this protein is NAD(P)H-quinone oxidoreductase subunit I, chloroplastic.